Consider the following 330-residue polypeptide: MATH domain and coiled-coil domain-containing protein At3g58210 (330 aa).

The 128-residue stretch at 6-133 (DNKFTWVIQN…NDELKIVAEV (128 aa)) folds into the MATH domain. Residues 263–314 (FKVDWLEKKLEEVKKKKEEEQTGEARIQELEEELKEFKQKCLDREAMLEKEK) adopt a coiled-coil conformation.

The polypeptide is MATH domain and coiled-coil domain-containing protein At3g58210 (Arabidopsis thaliana (Mouse-ear cress)).